The sequence spans 351 residues: Anthranilate phosphoribosyltransferase (351 aa).

5-phospho-alpha-D-ribose 1-diphosphate contacts are provided by residues glycine 84, 87-88, 95-98, 113-121, and alanine 125; these read GD, NISS, and KHGNRGASS. Glycine 84 serves as a coordination point for anthranilate. Serine 97 serves as a coordination point for Mg(2+). An anthranilate-binding site is contributed by asparagine 116. Arginine 171 contributes to the anthranilate binding site. Residues aspartate 229 and lysine 230 each coordinate Mg(2+).

It belongs to the anthranilate phosphoribosyltransferase family. Homodimer. Mg(2+) is required as a cofactor.

It carries out the reaction N-(5-phospho-beta-D-ribosyl)anthranilate + diphosphate = 5-phospho-alpha-D-ribose 1-diphosphate + anthranilate. The protein operates within amino-acid biosynthesis; L-tryptophan biosynthesis; L-tryptophan from chorismate: step 2/5. Its function is as follows. Catalyzes the transfer of the phosphoribosyl group of 5-phosphorylribose-1-pyrophosphate (PRPP) to anthranilate to yield N-(5'-phosphoribosyl)-anthranilate (PRA). In Clavibacter michiganensis subsp. michiganensis (strain NCPPB 382), this protein is Anthranilate phosphoribosyltransferase.